A 203-amino-acid chain; its full sequence is V-type ATP synthase subunit D (203 aa).

The protein belongs to the V-ATPase D subunit family.

Functionally, produces ATP from ADP in the presence of a proton gradient across the membrane. This chain is V-type ATP synthase subunit D (atpD), found in Chlamydia muridarum (strain MoPn / Nigg).